The sequence spans 569 residues: Proline--tRNA ligase (569 aa).

It belongs to the class-II aminoacyl-tRNA synthetase family. ProS type 1 subfamily. As to quaternary structure, homodimer.

Its subcellular location is the cytoplasm. The catalysed reaction is tRNA(Pro) + L-proline + ATP = L-prolyl-tRNA(Pro) + AMP + diphosphate. In terms of biological role, catalyzes the attachment of proline to tRNA(Pro) in a two-step reaction: proline is first activated by ATP to form Pro-AMP and then transferred to the acceptor end of tRNA(Pro). As ProRS can inadvertently accommodate and process non-cognate amino acids such as alanine and cysteine, to avoid such errors it has two additional distinct editing activities against alanine. One activity is designated as 'pretransfer' editing and involves the tRNA(Pro)-independent hydrolysis of activated Ala-AMP. The other activity is designated 'posttransfer' editing and involves deacylation of mischarged Ala-tRNA(Pro). The misacylated Cys-tRNA(Pro) is not edited by ProRS. The polypeptide is Proline--tRNA ligase (Legionella pneumophila (strain Paris)).